We begin with the raw amino-acid sequence, 298 residues long: Zinc import ATP-binding protein ZnuC (298 aa).

Residues 17–232 (IELRNAGVYR…PEYVRLFGSR (216 aa)) enclose the ABC transporter domain. 49–56 (GQNGAGKS) contributes to the ATP binding site. The tract at residues 273-298 (RGHCHVEDGHHHDHEHHHHEGGQPRA) is disordered. Residues 276–298 (CHVEDGHHHDHEHHHHEGGQPRA) are compositionally biased toward basic and acidic residues.

The protein belongs to the ABC transporter superfamily. Zinc importer (TC 3.A.1.15.5) family. As to quaternary structure, the complex is composed of two ATP-binding proteins (ZnuC), two transmembrane proteins (ZnuB) and a solute-binding protein (ZnuA).

Its subcellular location is the cell inner membrane. It carries out the reaction Zn(2+)(out) + ATP(in) + H2O(in) = Zn(2+)(in) + ADP(in) + phosphate(in) + H(+)(in). In terms of biological role, part of the ABC transporter complex ZnuABC involved in zinc import. Responsible for energy coupling to the transport system. This Brucella melitensis biotype 1 (strain ATCC 23456 / CCUG 17765 / NCTC 10094 / 16M) protein is Zinc import ATP-binding protein ZnuC.